We begin with the raw amino-acid sequence, 363 residues long: uncharacterized protein (363 aa).

A disordered region spans residues 35-262; it reads TVPGPPGAES…GLSPCCGDGG (228 aa). The segment covering 56–75 has biased composition (polar residues); that stretch reads AVSSSRNPNSAGRTPNSYLT. Residues 100-116 are compositionally biased toward low complexity; that stretch reads GADPALGSLPAAGLSGL.

This is an uncharacterized protein from Homo sapiens (Human).